We begin with the raw amino-acid sequence, 142 residues long: MRVILGSDLDGIKLKAEMKQYLLQEKVEVIDKSESASEDFIEATLAVAHEVLKDTESLGIVFDGYGAGSFMTAAKIKGMIVAELSDERSAYMAREHNNARMITVGAKIVGTELAKNIIKEFLTGHYAGGRHQIRVDMLNKMA.

Belongs to the LacAB/RpiB family. In terms of assembly, heteromultimeric protein consisting of LacA and LacB.

The enzyme catalyses aldehydo-D-galactose 6-phosphate = keto-D-tagatose 6-phosphate. It functions in the pathway carbohydrate metabolism; D-galactose 6-phosphate degradation; D-tagatose 6-phosphate from D-galactose 6-phosphate: step 1/1. This Enterococcus faecalis (strain ATCC 700802 / V583) protein is Galactose-6-phosphate isomerase subunit LacA.